Here is a 324-residue protein sequence, read N- to C-terminus: Lactonase drp35 (324 aa).

Positions 47, 109, 111, 129, 132, 134, 137, 184, 235, and 236 each coordinate Ca(2+). Catalysis depends on D235, which acts as the Proton donor.

The protein belongs to the SMP-30/CGR1 family. Ca(2+) is required as a cofactor.

It is found in the cytoplasm. Functionally, exhibits lactonase activity. Acts in cells with perturbed membrane integrity and is possibly related to the membrane homeostasis. In Staphylococcus aureus (strain bovine RF122 / ET3-1), this protein is Lactonase drp35 (drp35).